The following is a 284-amino-acid chain: uncharacterized protein (284 aa).

The C3H1-type zinc-finger motif lies at 37–65 (NEKKLICFSIINGENCIYGPNCTYAHSLS).

This is an uncharacterized protein from Acanthamoeba polyphaga (Amoeba).